The primary structure comprises 299 residues: Phosphoribosylaminoimidazole-succinocarboxamide synthase (299 aa).

The protein belongs to the SAICAR synthetase family.

The catalysed reaction is 5-amino-1-(5-phospho-D-ribosyl)imidazole-4-carboxylate + L-aspartate + ATP = (2S)-2-[5-amino-1-(5-phospho-beta-D-ribosyl)imidazole-4-carboxamido]succinate + ADP + phosphate + 2 H(+). It participates in purine metabolism; IMP biosynthesis via de novo pathway; 5-amino-1-(5-phospho-D-ribosyl)imidazole-4-carboxamide from 5-amino-1-(5-phospho-D-ribosyl)imidazole-4-carboxylate: step 1/2. The chain is Phosphoribosylaminoimidazole-succinocarboxamide synthase (ade7) from Schizosaccharomyces pombe (strain 972 / ATCC 24843) (Fission yeast).